The sequence spans 366 residues: C-X-C chemokine receptor type 3 (366 aa).

The Extracellular segment spans residues 1 to 55; that stretch reads MVPEMSERQEFQASEFAYLLENSSYDYGENETYFCCTSPPCPQDFSLNFDRTFLP. The N-linked (GlcNAc...) asparagine glycan is linked to N22. Sulfotyrosine occurs at positions 25 and 27. A glycan (N-linked (GlcNAc...) asparagine) is linked at N30. A helical transmembrane segment spans residues 56–76; it reads VLYSLLFVLGLLGNGVVAVVL. The Cytoplasmic segment spans residues 77–88; sequence LSQRAALSSTDT. The chain crosses the membrane as a helical span at residues 89 to 109; the sequence is FLLHLAVADALLVLTLPLWAV. The Extracellular portion of the chain corresponds to 110–124; it reads DAAIQWVFGSGLCKV. An intrachain disulfide couples C122 to C201. Residues 125–145 form a helical membrane-spanning segment; the sequence is AGALFNINFYAGALLLACISF. The Cytoplasmic segment spans residues 146 to 167; it reads DRYLSIVHATQFYRRGPPARVA. Residues 168-188 traverse the membrane as a helical segment; that stretch reads LTCVAVWGLCLLFALPDFIFL. The Extracellular segment spans residues 189 to 221; it reads SSHHDNRLNATHCQYNFPQEGRTALRVLQLVAG. N197 carries an N-linked (GlcNAc...) asparagine glycan. A helical transmembrane segment spans residues 222-242; sequence FLLPLLVMAYCYARILTVLLV. Residues 243–254 are Cytoplasmic-facing; it reads SRGQRRLRAMRL. The helical transmembrane segment at 255–275 threads the bilayer; the sequence is VVVVVVAFALCWTPYHLVVLV. Residues 276–299 lie on the Extracellular side of the membrane; the sequence is DTLMDLGALARNCGRESRVDVAKS. Residues 300 to 320 form a helical membrane-spanning segment; it reads VTSGMGYMHCCLNPLLYAFVG. At 321–366 the chain is on the cytoplasmic side; the sequence is VKFRERMWVLLMRLGCPDQRGHQRQPSASRRDSSWSETTEASYSGL. The segment at 339 to 366 is disordered; sequence QRGHQRQPSASRRDSSWSETTEASYSGL. Residues 355–366 are compositionally biased toward polar residues; it reads WSETTEASYSGL.

It belongs to the G-protein coupled receptor 1 family. As to quaternary structure, homomer. Forms heteromers with ACKR4. Interacts with PF4/CXCL4. Post-translationally, sulfation on Tyr-25 and Tyr-27 is essential for CXCL10 binding. In terms of processing, N-glycosylated.

The protein localises to the cell membrane. Functionally, receptor for the C-X-C chemokine CXCL9, CXCL10 and CXCL11 and mediates the proliferation, survival and angiogenic activity of mesangial cells through a heterotrimeric G-protein signaling pathway. Probably promotes cell chemotaxis response. Binds to CCL21. Upon activation by PF4, induces activated T-lymphocytes migration mediated via downstream Ras/extracellular signal-regulated kinase (ERK) signaling. The sequence is that of C-X-C chemokine receptor type 3 (CXCR3) from Capra hircus (Goat).